The primary structure comprises 252 residues: O-methyltransferase hkm8 (252 aa).

S-adenosyl-L-methionine contacts are provided by residues Glu-73, 75–76, Ser-81, and Asp-100; that span reads GT.

Belongs to the class I-like SAM-binding methyltransferase superfamily. Cation-dependent O-methyltransferase family.

It participates in secondary metabolite biosynthesis. In terms of biological role, O-methyltransferase; part of the gene cluster that mediates the biosynthesis of hancockiamides, an unusual new family of N-cinnamoylated piperazines. The NRPS hkm10 and the NmrA-like reductase hkm9 are proposed to convert two molecules of L-Phe to the intermediary piperazine called xenocockiamide A. Xenocockiamide A is then converted to hancockiamide D via a series of hydroxylations and O-methylations. The tyrosinase hkm6 may catalyze an aromatic hydroxylation, then the 2-oxoglutarate-dependent Fe(II) dioxygenase hkm4 and the FAD-dependent phenol hydroxylase hkm7 may catalyze consecutive hydroxylations to install 2 more hydroxy groups, and the methyltransferase hkm8 probably catalyzes two methylations using 2 molecules of S-adenosyl-L-methionine (SAM). The NRPS hkm11 activates and transfers trans-cinnamate supplied by the PAL hkm12 to hancockiamide D and produces hancockiamide A. NRPS Hkm11 has the flexibility to tolerate the bulky hancockiamide G as a substrate and the absence of the acetyl-transferase hkm3 opens up the opportunity for hkm11 to introduce a second N-cinnamoyl moiety. The cytochrome P450 monooxygenase hkm5 catalyzes the methylenedioxy bridge formation, converting hancockiamide A into hancockiamide G. Hkm5 can also convert hancockiamide B into hancockiamide C, and hancockiamide D into hancockiamide H. The N-acetyltransferase hkm3 finally transfers an acetyl group to 1-N of piperazine, converting hancockiamide A into hancockiamide B and hancockiamide G into hancockiamide C. In Aspergillus hancockii, this protein is O-methyltransferase hkm8.